The following is a 180-amino-acid chain: Insulin-like growth factor 2 (180 aa).

The signal sequence occupies residues 1 to 24 (MGIPVGKSMLVLLISLAFALCCIA). The b stretch occupies residues 25-52 (AYRPSETLCGGELVDTLQFVCSDRGFYF). 3 disulfide bridges follow: Cys-33–Cys-71, Cys-45–Cys-84, and Cys-70–Cys-75. Residues 53–64 (SRPSSRANRRSR) are c. Residues 65–85 (GIVEECCFRSCDLALLETYCA) form an a region. The segment at 86–91 (TPAKSE) is d. A propeptide spans 92 to 180 (RDVSTSQAVL…ASSEMSSNHQ (89 aa)) (e peptide). The interval 160 to 180 (VLPPKDPAHGGASSEMSSNHQ) is disordered.

This sequence belongs to the insulin family. As to quaternary structure, interacts with MYORG; this interaction is required for IGF2 secretion. Interacts with integrins ITGAV:ITGB3 and ITGA6:ITGB4; integrin-binding is required for IGF2 signaling. Interacts with IGFBP2. Proteolytically processed by PCSK4, proIGF2 is cleaved at Arg-128 and Arg-92 to generate big-IGF2 and mature IGF2.

The protein localises to the secreted. In terms of biological role, the insulin-like growth factors possess growth-promoting activity. Major fetal growth hormone in mammals. Plays a key role in regulating fetoplacental development. IGF2 is influenced by placental lactogen. Also involved in tissue differentiation. In adults, involved in glucose metabolism in adipose tissue, skeletal muscle and liver. Acts as a ligand for integrin which is required for IGF2 signaling. Positively regulates myogenic transcription factor MYOD1 function by facilitating the recruitment of transcriptional coactivators, thereby controlling muscle terminal differentiation. Inhibits myoblast differentiation and modulates metabolism via increasing the mitochondrial respiration rate. Functionally, preptin undergoes glucose-mediated co-secretion with insulin, and acts as a physiological amplifier of glucose-mediated insulin secretion. Exhibits osteogenic properties by increasing osteoblast mitogenic activity through phosphoactivation of MAPK1 and MAPK3. The sequence is that of Insulin-like growth factor 2 from Rattus norvegicus (Rat).